Here is a 366-residue protein sequence, read N- to C-terminus: GTP cyclohydrolase 1 type 2 homolog (366 aa).

Zn(2+) contacts are provided by His64, His65, Asp102, His326, and Glu329.

Belongs to the GTP cyclohydrolase I type 2/NIF3 family. As to quaternary structure, homohexamer.

In Staphylococcus aureus (strain MSSA476), this protein is GTP cyclohydrolase 1 type 2 homolog.